The following is a 256-amino-acid chain: Pyridoxine 5'-phosphate synthase (256 aa).

Residue Asn-10 coordinates 3-amino-2-oxopropyl phosphate. Residue 12 to 13 (DH) coordinates 1-deoxy-D-xylulose 5-phosphate. Arg-21 contributes to the 3-amino-2-oxopropyl phosphate binding site. The Proton acceptor role is filled by His-46. 2 residues coordinate 1-deoxy-D-xylulose 5-phosphate: Arg-48 and His-53. Glu-73 acts as the Proton acceptor in catalysis. Thr-103 contacts 1-deoxy-D-xylulose 5-phosphate. The Proton donor role is filled by His-193. Residues Gly-194 and 215–216 (GH) each bind 3-amino-2-oxopropyl phosphate.

Belongs to the PNP synthase family. As to quaternary structure, homooctamer; tetramer of dimers.

The protein localises to the cytoplasm. It catalyses the reaction 3-amino-2-oxopropyl phosphate + 1-deoxy-D-xylulose 5-phosphate = pyridoxine 5'-phosphate + phosphate + 2 H2O + H(+). The protein operates within cofactor biosynthesis; pyridoxine 5'-phosphate biosynthesis; pyridoxine 5'-phosphate from D-erythrose 4-phosphate: step 5/5. Its function is as follows. Catalyzes the complicated ring closure reaction between the two acyclic compounds 1-deoxy-D-xylulose-5-phosphate (DXP) and 3-amino-2-oxopropyl phosphate (1-amino-acetone-3-phosphate or AAP) to form pyridoxine 5'-phosphate (PNP) and inorganic phosphate. This is Pyridoxine 5'-phosphate synthase from Zymomonas mobilis subsp. mobilis (strain ATCC 31821 / ZM4 / CP4).